The following is a 421-amino-acid chain: Tubulin gamma-3 chain (421 aa).

GTP is bound at residue 94–100 (AGGTGSG).

Belongs to the tubulin family.

It localises to the cytoplasm. Its subcellular location is the cytoskeleton. The protein resides in the microtubule organizing center. Its function is as follows. Tubulin is the major constituent of microtubules. The gamma chain is found at microtubule organizing centers (MTOC) such as the spindle poles, suggesting that it is involved in the minus-end nucleation of microtubule assembly. The chain is Tubulin gamma-3 chain (TUBG3) from Zea mays (Maize).